The primary structure comprises 262 residues: Virulence regulon transcriptional activator VirF (262 aa).

The 98-residue stretch at 161 to 258 folds into the HTH araC/xylS-type domain; the sequence is DQIRKIVEKN…GITPKKFYLY (98 aa). 2 DNA-binding regions (H-T-H motif) span residues 178–199 and 225–248; these read SDIS…ESEK and INDV…NEYY.

In terms of assembly, homodimer.

Functionally, primary regulator of plasmid-encoded virulence genes. Activates the transcription of icsA (virG) and of virB, which is an activator of the ipaABCD virulence regulon. The chain is Virulence regulon transcriptional activator VirF (virF) from Shigella dysenteriae.